The primary structure comprises 260 residues: Centromere protein K (260 aa).

The stretch at 84–173 (EEELQKVKKE…KKLMNALGEF (90 aa)) forms a coiled coil.

This sequence belongs to the CENP-K/MCM22 family. As to quaternary structure, component of the CENPA-HI complex, at least composed of CENPH, CENPI, CENPK, CENPL, CENPM, CENPO and CENPP.

Its subcellular location is the nucleus. It is found in the chromosome. The protein localises to the centromere. The protein resides in the kinetochore. Component of the CENPA-HI complex, a centromeric complex involved in assembly of kinetochore proteins, mitotic progression and chromosome segregation. The polypeptide is Centromere protein K (CENPK) (Gallus gallus (Chicken)).